Consider the following 324-residue polypeptide: Autolytic lysozyme (324 aa).

Catalysis depends on residues Asp-5 and Glu-91. Repeat copies occupy residues 212–234, 235–254, 255–277, 278–300, and 301–324. Positions 212–324 are 5 X 23 AA tandem repeats; it reads LLKRGLEVDG…ATWSKLLDEN (113 aa).

This sequence belongs to the glycosyl hydrolase 25 family. As to quaternary structure, monomer.

The protein resides in the secreted. It is found in the cytoplasm. The enzyme catalyses Hydrolysis of (1-&gt;4)-beta-linkages between N-acetylmuramic acid and N-acetyl-D-glucosamine residues in a peptidoglycan and between N-acetyl-D-glucosamine residues in chitodextrins.. This is Autolytic lysozyme (lyc) from Clostridium acetobutylicum (strain ATCC 824 / DSM 792 / JCM 1419 / IAM 19013 / LMG 5710 / NBRC 13948 / NRRL B-527 / VKM B-1787 / 2291 / W).